The primary structure comprises 395 residues: Imidazolonepropionase (395 aa).

The Fe(3+) site is built by histidine 72 and histidine 74. 2 residues coordinate Zn(2+): histidine 72 and histidine 74. 3 residues coordinate 4-imidazolone-5-propanoate: arginine 81, tyrosine 144, and histidine 174. Tyrosine 144 is an N-formimidoyl-L-glutamate binding site. Histidine 231 contacts Fe(3+). Residue histidine 231 participates in Zn(2+) binding. Glutamate 234 contacts 4-imidazolone-5-propanoate. Aspartate 306 is a Fe(3+) binding site. Aspartate 306 is a Zn(2+) binding site.

The protein belongs to the metallo-dependent hydrolases superfamily. HutI family. It depends on Zn(2+) as a cofactor. The cofactor is Fe(3+).

Its subcellular location is the cytoplasm. The enzyme catalyses 4-imidazolone-5-propanoate + H2O = N-formimidoyl-L-glutamate. Its pathway is amino-acid degradation; L-histidine degradation into L-glutamate; N-formimidoyl-L-glutamate from L-histidine: step 3/3. Functionally, catalyzes the hydrolytic cleavage of the carbon-nitrogen bond in imidazolone-5-propanoate to yield N-formimidoyl-L-glutamate. It is the third step in the universal histidine degradation pathway. This is Imidazolonepropionase from Pyrobaculum arsenaticum (strain DSM 13514 / JCM 11321 / PZ6).